An 84-amino-acid chain; its full sequence is UPF0473 protein CLD_2004 (84 aa).

This sequence belongs to the UPF0473 family.

This chain is UPF0473 protein CLD_2004, found in Clostridium botulinum (strain Okra / Type B1).